Here is a 112-residue protein sequence, read N- to C-terminus: Protein BEX5 (112 aa).

Basic and acidic residues-rich tracts occupy residues 1–12 (MEKDPKERREEE) and 30–51 (PKPR…REDM). The interval 1 to 56 (MEKDPKERREEEQAPVQNEEACPMGGGEGPKPRENVRGDWDPPAQDFREDMPNGLV) is disordered. The segment at 101–105 (HHDHH) is his cluster. Cysteine 109 serves as a coordination point for Zn(2+).

Belongs to the BEX family. In terms of processing, ubiquitinated. Degraded by the proteasome.

The protein localises to the cytoplasm. This is Protein BEX5 (BEX5) from Bos taurus (Bovine).